The primary structure comprises 214 residues: CASP-like protein UU5 (214 aa).

Positions 1–20 (MSTVAQDSAPGGGKIQDAME) are disordered. Residues 1 to 57 (MSTVAQDSAPGGGKIQDAMEQGAPGASSAAVVPEGGHYTQTPSPAFQAVKKNINHMS) lie on the Cytoplasmic side of the membrane. The helical transmembrane segment at 58–78 (AFSLGLRVAEFVLSVIAFSLM) threads the bilayer. Topologically, residues 79-99 (ASADQNGAVYSTFTSYSFVLA) are extracellular. The chain crosses the membrane as a helical span at residues 100-120 (VNVLVVFYTIGQIIMSVLLLV). Topologically, residues 121 to 138 (SGSTPKKIYLFITFGCDQ) are cytoplasmic. The chain crosses the membrane as a helical span at residues 139-159 (LSAFLLMAAGAAGASVALIIN). Over 160-193 (RGGVTDAYGNGCIDGKITSFCSHAQASVAFTFLS) the chain is Extracellular. A helical transmembrane segment spans residues 194 to 214 (FFCMVISSLLGVYSLAPYLIL).

The protein belongs to the Casparian strip membrane proteins (CASP) family. Homodimer and heterodimers.

It localises to the cell membrane. The sequence is that of CASP-like protein UU5 from Physcomitrium patens (Spreading-leaved earth moss).